The chain runs to 344 residues: Fructose-1,6-bisphosphatase class 1 (344 aa).

Mg(2+) contacts are provided by Glu91, Asp110, Leu112, and Asp113. Substrate contacts are provided by residues 113–116 and Asn200; that span reads DGSS. A Mg(2+)-binding site is contributed by Glu272.

Belongs to the FBPase class 1 family. Homotetramer. It depends on Mg(2+) as a cofactor.

The protein resides in the cytoplasm. The enzyme catalyses beta-D-fructose 1,6-bisphosphate + H2O = beta-D-fructose 6-phosphate + phosphate. Its pathway is carbohydrate biosynthesis; Calvin cycle. The chain is Fructose-1,6-bisphosphatase class 1 from Rhodopseudomonas palustris (strain BisA53).